Consider the following 126-residue polypeptide: uncharacterized protein (126 aa).

This is an uncharacterized protein from Agrobacterium tumefaciens (strain 15955).